Consider the following 547-residue polypeptide: 4-coumarate-CoA ligase 1 (547 aa).

Residues 190–194 (SSGTT), histidine 238, 310–312 (AAP), 332–333 (QG), threonine 337, aspartate 421, arginine 436, and lysine 527 each bind ATP. Residues 263 to 332 (EIVRLMELVE…EKLPNAKLGQ (70 aa)) form an SBD1 region. Positions 333-400 (GYGMTEAGPV…IRGNQIMKGY (68 aa)) are SBD2.

Belongs to the ATP-dependent AMP-binding enzyme family. In terms of tissue distribution, mostly expressed in stems, and, to a lower extent, in bulbs.

It catalyses the reaction (E)-4-coumarate + ATP + CoA = (E)-4-coumaroyl-CoA + AMP + diphosphate. Its pathway is phytoalexin biosynthesis; 3,4',5-trihydroxystilbene biosynthesis; 3,4',5-trihydroxystilbene from trans-4-coumarate: step 1/2. In terms of biological role, produces CoA thioesters of a variety of hydroxy- and methoxy-substituted cinnamic acids, which are used to synthesize several phenylpropanoid-derived compounds, including anthocyanins, flavonoids, isoflavonoids, coumarins, lignin, suberin and wall-bound phenolics. This is 4-coumarate-CoA ligase 1 from Narcissus pseudonarcissus (Daffodil).